Consider the following 87-residue polypeptide: Large ribosomal subunit protein bL27 (87 aa).

The segment covering 1–11 (MASKASGGSTR) has biased composition (polar residues). Residues 1 to 21 (MASKASGGSTRNGRDSNSKRL) are disordered.

This sequence belongs to the bacterial ribosomal protein bL27 family.

This chain is Large ribosomal subunit protein bL27, found in Hydrogenobaculum sp. (strain Y04AAS1).